Reading from the N-terminus, the 737-residue chain is Protein OPG064 (737 aa).

The residue at position 1 (M1) is an N-acetylmethionine; by host. C496 and C535 are disulfide-bonded.

The protein belongs to the orthopoxvirus OPG064 family. As to quaternary structure, interacts with host KLC2; this interaction promotes IEV trafficking by engaging the host kinesin-1 complex. Interacts with protein OPG056. In terms of processing, N-acetylated on initiator methionine by host.

Its function is as follows. Plays a role in intracellular enveloped virus (IEV) transport to the cell surface on microtubules. Together with protein OPG056, forms a complex that interacts with host KLC2 (kinesin light chain isoform 2) to engage the kinesin-1 complex and thereby promote IEV trafficking. The protein is Protein OPG064 (OPG064) of Homo sapiens (Human).